Consider the following 459-residue polypeptide: Putrescine aminotransferase (459 aa).

Pyridoxal 5'-phosphate is bound by residues 150 to 151 and glutamine 274; that span reads GT. The residue at position 300 (lysine 300) is an N6-(pyridoxal phosphate)lysine. Pyridoxal 5'-phosphate is bound at residue threonine 332.

This sequence belongs to the class-III pyridoxal-phosphate-dependent aminotransferase family. Putrescine aminotransferase subfamily. Pyridoxal 5'-phosphate is required as a cofactor.

It carries out the reaction an alkane-alpha,omega-diamine + 2-oxoglutarate = an omega-aminoaldehyde + L-glutamate. The enzyme catalyses putrescine + 2-oxoglutarate = 1-pyrroline + L-glutamate + H2O. It catalyses the reaction cadaverine + 2-oxoglutarate = 5-aminopentanal + L-glutamate. The protein operates within amine and polyamine degradation; putrescine degradation; 4-aminobutanal from putrescine (transaminase route): step 1/1. In terms of biological role, catalyzes the aminotransferase reaction from putrescine to 2-oxoglutarate, leading to glutamate and 4-aminobutanal, which spontaneously cyclizes to form 1-pyrroline. This is the first step in one of two pathways for putrescine degradation, where putrescine is converted into 4-aminobutanoate (gamma-aminobutyrate or GABA) via 4-aminobutanal. Also functions as a cadaverine transaminase in a a L-lysine degradation pathway to succinate that proceeds via cadaverine, glutarate and L-2-hydroxyglutarate. The polypeptide is Putrescine aminotransferase (Escherichia coli O6:H1 (strain CFT073 / ATCC 700928 / UPEC)).